Reading from the N-terminus, the 70-residue chain is MGSFSIWHWLIVLVVVLLIFGTKKLRNIGSDLGGAVKGFKEGMKDDAPKISESDKGGHTIDAEVKDKQNS.

The chain crosses the membrane as a helical span at residues 1–21 (MGSFSIWHWLIVLVVVLLIFG). The tract at residues 46 to 70 (DAPKISESDKGGHTIDAEVKDKQNS) is disordered.

The protein belongs to the TatA/E family. The Tat system comprises two distinct complexes: a TatABC complex, containing multiple copies of TatA, TatB and TatC subunits, and a separate TatA complex, containing only TatA subunits. Substrates initially bind to the TatABC complex, which probably triggers association of the separate TatA complex to form the active translocon.

It is found in the cell inner membrane. Functionally, part of the twin-arginine translocation (Tat) system that transports large folded proteins containing a characteristic twin-arginine motif in their signal peptide across membranes. TatA could form the protein-conducting channel of the Tat system. The protein is Sec-independent protein translocase protein TatA of Thiobacillus denitrificans (strain ATCC 25259 / T1).